Reading from the N-terminus, the 138-residue chain is 1,4-dihydroxy-2-naphthoyl-CoA hydrolase (138 aa).

Asp-14 is an active-site residue.

This sequence belongs to the 4-hydroxybenzoyl-CoA thioesterase family. DHNA-CoA hydrolase subfamily.

The catalysed reaction is 1,4-dihydroxy-2-naphthoyl-CoA + H2O = 1,4-dihydroxy-2-naphthoate + CoA + H(+). It participates in cofactor biosynthesis; phylloquinone biosynthesis. The protein operates within quinol/quinone metabolism; 1,4-dihydroxy-2-naphthoate biosynthesis; 1,4-dihydroxy-2-naphthoate from chorismate: step 7/7. Catalyzes the hydrolysis of 1,4-dihydroxy-2-naphthoyl-CoA (DHNA-CoA) to 1,4-dihydroxy-2-naphthoate (DHNA), a reaction involved in phylloquinone (vitamin K1) biosynthesis. The protein is 1,4-dihydroxy-2-naphthoyl-CoA hydrolase of Rippkaea orientalis (strain PCC 8801 / RF-1) (Cyanothece sp. (strain PCC 8801)).